We begin with the raw amino-acid sequence, 513 residues long: Protein STB3 (513 aa).

3 disordered regions span residues 1 to 20, 134 to 159, and 227 to 249; these read MSEN…KSEA, KDLI…KVEM, and YQNK…PYSF. Residues 134–143 show a composition bias toward basic and acidic residues; that stretch reads KDLISQESQR. Residues 230–244 show a composition bias toward low complexity; it reads KSRNSSNNFGKSSNG. Position 254 is a phosphoserine (serine 254). Disordered regions lie at residues 282–354, 373–437, and 450–513; these read RRRS…KESS, NSKA…EDWE, and APNI…SLKS. A compositionally biased stretch (polar residues) spans 296–306; sequence KLNTHQDSSYL. Residues 307–324 show a composition bias toward low complexity; sequence SPNTTSTTTPSNNNSNSN. 4 stretches are compositionally biased toward polar residues: residues 373–396, 409–418, 450–463, and 470–479; these read NSKA…SNPI, QHLNGESSPQ, APNI…TNGV, and NPSFTNSQNG. Basic and acidic residues predominate over residues 488 to 500; that stretch reads DQQKHEQQPRNGE.

This sequence belongs to the STB3 family. Interacts with SIN3.

The protein resides in the cytoplasm. The chain is Protein STB3 (STB3) from Saccharomyces cerevisiae (strain ATCC 204508 / S288c) (Baker's yeast).